Here is a 1013-residue protein sequence, read N- to C-terminus: Sodium/potassium-transporting ATPase subunit alpha-3 (1013 aa).

The disordered stretch occupies residues 1–24; that stretch reads MGDKKDDKDSPKKNKGKERRDLDD. Over 1 to 77 the chain is Cytoplasmic; the sequence is MGDKKDDKDS…NALTPPPTTP (77 aa). A phosphoserine mark is found at Ser37 and Ser56. Residues 72–74 form an interaction with phosphoinositide-3 kinase region; sequence PPP. The helical transmembrane segment at 78–98 threads the bilayer; the sequence is EWVKFCRQLFGGFSILLWIGA. Residues 99–121 lie on the Extracellular side of the membrane; the sequence is ILCFLAYGIQAGTEDDPSGDNLY. A helical membrane pass occupies residues 122-142; the sequence is LGIVLAAVVIITGCFSYYQEA. Topologically, residues 143 to 278 are cytoplasmic; that stretch reads KSSKIMESFK…VGKTPIAIEI (136 aa). Ser218 and Ser265 each carry phosphoserine. Residues 279–298 form a helical membrane-spanning segment; that stretch reads EHFIQLITGVAVFLGVSFFI. At 299-310 the chain is on the extracellular side; that stretch reads LSLILGYTWLEA. The helical transmembrane segment at 311-328 threads the bilayer; that stretch reads VIFLIGIIVANVPEGLLA. Residues 329 to 762 lie on the Cytoplasmic side of the membrane; sequence TVTVCLTLTA…EEGRLIFDNL (434 aa). The active-site 4-aspartylphosphate intermediate is Asp366. At Ser442 the chain carries Phosphoserine. Residue Tyr548 is modified to Phosphotyrosine. Residues Asp707 and Asp711 each coordinate Mg(2+). A helical membrane pass occupies residues 763-782; that stretch reads KKSIAYTLTSNIPEITPFLL. Topologically, residues 783-792 are extracellular; that stretch reads FIMANIPLPL. The chain crosses the membrane as a helical span at residues 793–813; sequence GTITILCIDLGTDMVPAISLA. Over 814 to 833 the chain is Cytoplasmic; sequence YEAAESDIMKRQPRNPRTDK. The helical transmembrane segment at 834 to 856 threads the bilayer; that stretch reads LVNERLISMAYGQIGMIQALGGF. The Extracellular segment spans residues 857 to 908; that stretch reads FSYFVILAENGFLPGNLVGIRLNWDDRTVNDLEDSYGQQWTYEQRKVVEFTC. The helical transmembrane segment at 909–928 threads the bilayer; the sequence is HTAFFVSIVVVQWADLIICK. The Cytoplasmic segment spans residues 929–941; that stretch reads TRRNSVFQQGMKN. Ser933 carries the post-translational modification Phosphoserine; by PKA. A helical membrane pass occupies residues 942–960; that stretch reads KILIFGLFEETALAAFLSY. Residues 961-975 are Extracellular-facing; it reads CPGMDVALRMYPLKP. The helical transmembrane segment at 976-996 threads the bilayer; that stretch reads SWWFCAFPYSFLIFVYDEIRK. The Cytoplasmic portion of the chain corresponds to 997–1013; sequence LILRRNPGGWVEKETYY.

This sequence belongs to the cation transport ATPase (P-type) (TC 3.A.3) family. Type IIC subfamily. The sodium/potassium-transporting ATPase is composed of a catalytic alpha subunit, an auxiliary non-catalytic beta subunit and an additional regulatory subunit. Interacts with regulatory subunit FXYD1.

It is found in the cell membrane. The catalysed reaction is K(+)(out) + Na(+)(in) + ATP + H2O = K(+)(in) + Na(+)(out) + ADP + phosphate + H(+). This is the catalytic component of the active enzyme, which catalyzes the hydrolysis of ATP coupled with the exchange of sodium and potassium ions across the plasma membrane. This action creates the electrochemical gradient of sodium and potassium ions, providing the energy for active transport of various nutrients. This chain is Sodium/potassium-transporting ATPase subunit alpha-3 (ATP1A3), found in Homo sapiens (Human).